Reading from the N-terminus, the 300-residue chain is Ribosomal protein bS6--L-glutamate ligase (300 aa).

The ATP-grasp domain occupies 104–287 (MQLLARQGID…IASKMIRWIE (184 aa)). Residues lysine 141, 178 to 179 (EY), aspartate 187, and 211 to 213 (RSN) contribute to the ATP site. Residues aspartate 248, glutamate 260, and asparagine 262 each coordinate Mg(2+). The Mn(2+) site is built by aspartate 248, glutamate 260, and asparagine 262.

It belongs to the RimK family. The cofactor is Mg(2+). Mn(2+) serves as cofactor.

Functionally, an L-glutamate ligase that catalyzes the ATP-dependent post-translational addition of glutamate residues to the C-terminus of ribosomal protein bS6 (RpsF). Is also able to catalyze the synthesis of poly-alpha-glutamate in vitro, via ATP hydrolysis from unprotected glutamate as substrate. The number of glutamate residues added to either RpsF or to poly-alpha-glutamate changes with pH. In Escherichia coli O81 (strain ED1a), this protein is Ribosomal protein bS6--L-glutamate ligase.